The chain runs to 323 residues: Fructokinase-1 (323 aa).

The protein belongs to the carbohydrate kinase PfkB family. In terms of tissue distribution, expressed in root, endosperm and leaf tissues.

The catalysed reaction is D-fructose + ATP = D-fructose 6-phosphate + ADP + H(+). Its pathway is glycan biosynthesis; starch biosynthesis. Its activity is regulated as follows. Completely inhibited at 50 mM ATP, but not inhibited at high fructose concentration. Its function is as follows. Fructokinase that may play an important role in maintaining the flux of carbon towards starch formation. May also be involved in a sugar-sensing pathway. The chain is Fructokinase-1 from Oryza sativa subsp. japonica (Rice).